The following is a 275-amino-acid chain: Nitrogenase iron protein 3 (275 aa).

Residue G9–S16 participates in ATP binding. C97 lines the [4Fe-4S] cluster pocket. Position 100 is an ADP-ribosylarginine; by dinitrogenase reductase ADP-ribosyltransferase (R100). C132 provides a ligand contact to [4Fe-4S] cluster.

This sequence belongs to the NifH/BchL/ChlL family. Homodimer. The cofactor is [4Fe-4S] cluster. In terms of processing, the reversible ADP-ribosylation of Arg-100 inactivates the nitrogenase reductase and regulates nitrogenase activity.

It carries out the reaction N2 + 8 reduced [2Fe-2S]-[ferredoxin] + 16 ATP + 16 H2O = H2 + 8 oxidized [2Fe-2S]-[ferredoxin] + 2 NH4(+) + 16 ADP + 16 phosphate + 6 H(+). Its function is as follows. The key enzymatic reactions in nitrogen fixation are catalyzed by the nitrogenase complex, which has 2 components: the iron protein and the molybdenum-iron protein. The sequence is that of Nitrogenase iron protein 3 (nifH3) from Clostridium pasteurianum.